The following is a 339-amino-acid chain: Tetraacyldisaccharide 4'-kinase (339 aa).

62 to 69 (VAGGTGKT) serves as a coordination point for ATP.

It belongs to the LpxK family.

It catalyses the reaction a lipid A disaccharide + ATP = a lipid IVA + ADP + H(+). The protein operates within glycolipid biosynthesis; lipid IV(A) biosynthesis; lipid IV(A) from (3R)-3-hydroxytetradecanoyl-[acyl-carrier-protein] and UDP-N-acetyl-alpha-D-glucosamine: step 6/6. Its function is as follows. Transfers the gamma-phosphate of ATP to the 4'-position of a tetraacyldisaccharide 1-phosphate intermediate (termed DS-1-P) to form tetraacyldisaccharide 1,4'-bis-phosphate (lipid IVA). This Xylella fastidiosa (strain M23) protein is Tetraacyldisaccharide 4'-kinase.